Reading from the N-terminus, the 293-residue chain is Putative DNA glycosylase At3g47830 (293 aa).

Residues 1–10 show a composition bias toward basic residues; sequence MSKAQKRKRL. The interval 1-34 is disordered; the sequence is MSKAQKRKRLNKYDGESKTPANKSTVDGGNPYPT. The DNA site is built by Asn108 and Lys151. Catalysis depends on Lys196, which acts as the Schiff-base intermediate with DNA. The DNA site is built by His216 and Asp232.

This sequence belongs to the DNA glycosylase family.

The sequence is that of Putative DNA glycosylase At3g47830 from Arabidopsis thaliana (Mouse-ear cress).